Here is a 467-residue protein sequence, read N- to C-terminus: ATP synthase subunit beta (467 aa).

156–163 (GGAGVGKT) is an ATP binding site.

Belongs to the ATPase alpha/beta chains family. F-type ATPases have 2 components, CF(1) - the catalytic core - and CF(0) - the membrane proton channel. CF(1) has five subunits: alpha(3), beta(3), gamma(1), delta(1), epsilon(1). CF(0) has three main subunits: a(1), b(2) and c(9-12). The alpha and beta chains form an alternating ring which encloses part of the gamma chain. CF(1) is attached to CF(0) by a central stalk formed by the gamma and epsilon chains, while a peripheral stalk is formed by the delta and b chains.

It localises to the cell membrane. The enzyme catalyses ATP + H2O + 4 H(+)(in) = ADP + phosphate + 5 H(+)(out). In terms of biological role, produces ATP from ADP in the presence of a proton gradient across the membrane. The catalytic sites are hosted primarily by the beta subunits. This chain is ATP synthase subunit beta, found in Cytobacillus firmus (Bacillus firmus).